The sequence spans 1063 residues: ATP-dependent helicase hrq1 (1063 aa).

Residues 224–243 (TQSRKNQPVPPDSPSIPNDS) form a disordered region. In terms of domain architecture, Helicase ATP-binding spans 320–503 (INHLWNGFHV…KIFGVDNIKL (184 aa)). 333 to 340 (TSTSSGKS) serves as a coordination point for ATP. Residues 444–447 (DEAH) carry the DEAH box motif. In terms of domain architecture, Helicase C-terminal spans 539–717 (EASKLLIKFA…ELPINIRSDE (179 aa)).

The protein belongs to the helicase family. HRQ1 subfamily. In terms of assembly, forms heptamer rings. Interacts with rhp14. The cofactor is Mg(2+).

It localises to the nucleus. It catalyses the reaction Couples ATP hydrolysis with the unwinding of duplex DNA by translocating in the 3'-5' direction.. The catalysed reaction is ATP + H2O = ADP + phosphate + H(+). In terms of biological role, helicase with 3'-5' helicase activity involved in genome stability. Functions in the nucleotide excision repair (NER) pathway and plays a critical role in DNA interstrand cross-link repair. Unwinds relatively long duplex DNA up to 120-bp and requires a long 3'-tail of at least 70 nucleotides for efficient unwinding of duplex DNA. Shows both processive helicase and DNA strand annealing activities. Affects telomere length by a non-catalytic mechanism, probably through inhibiting telomerase by competing with it for ssDNA binding. This is ATP-dependent helicase hrq1 from Schizosaccharomyces pombe (strain 972 / ATCC 24843) (Fission yeast).